The chain runs to 724 residues: Long-chain-fatty-acid--CoA ligase ACSBG1 (724 aa).

Residues 1–30 (MPRNSGAGYGCPHGDPSMLDSRETPQESRQ) form a disordered region. Over residues 20-30 (DSRETPQESRQ) the composition is skewed to basic and acidic residues. 2 positions are modified to phosphoserine: S53 and S56. ATP contacts are provided by residues 282–290 (TSGTTGNPK), 472–477 (AGYGLS), D550, and R565. Residue Y658 is modified to Phosphotyrosine. K701 lines the ATP pocket.

Belongs to the ATP-dependent AMP-binding enzyme family. Bubblegum subfamily. Expressed primarily in brain. Expressed at lower level in testis and adrenal gland. Present in all regions of brain except pituitary.

It localises to the cytoplasm. It is found in the cytoplasmic vesicle. The protein resides in the microsome. Its subcellular location is the endoplasmic reticulum. The protein localises to the cell membrane. The enzyme catalyses a long-chain fatty acid + ATP + CoA = a long-chain fatty acyl-CoA + AMP + diphosphate. It catalyses the reaction (E)-hexadec-2-enoate + ATP + CoA = (2E)-hexadecenoyl-CoA + AMP + diphosphate. It carries out the reaction hexadecanoate + ATP + CoA = hexadecanoyl-CoA + AMP + diphosphate. Its function is as follows. Catalyzes the conversion of fatty acids such as long-chain and very long-chain fatty acids to their active form acyl-CoAs for both synthesis of cellular lipids, and degradation via beta-oxidation. Can activate diverse saturated, monosaturated and polyunsaturated fatty acids. The sequence is that of Long-chain-fatty-acid--CoA ligase ACSBG1 from Homo sapiens (Human).